A 313-amino-acid polypeptide reads, in one-letter code: Serine/threonine-protein phosphatase CPPED1 (313 aa).

Ser2 carries the post-translational modification Phosphoserine. A catalytic region spans residues 47–250 (KAWATGDCDN…AVFSGHYHRN (204 aa)). A divalent metal cation-binding residues include Asp53, Asp90, Asn127, and His246. A Phosphoserine modification is found at Ser293.

The protein belongs to the metallophosphoesterase superfamily. CPPED1 family. A divalent metal cation is required as a cofactor.

The protein localises to the cytoplasm. The enzyme catalyses O-phospho-L-seryl-[protein] + H2O = L-seryl-[protein] + phosphate. The catalysed reaction is O-phospho-L-threonyl-[protein] + H2O = L-threonyl-[protein] + phosphate. Protein phosphatase that dephosphorylates AKT family kinase specifically at 'Ser-473', blocking cell cycle progression and promoting cell apoptosis. May play an inhibitory role in glucose uptake by adipocytes. The polypeptide is Serine/threonine-protein phosphatase CPPED1 (CPPED1) (Bos taurus (Bovine)).